Reading from the N-terminus, the 1072-residue chain is DNA-directed RNA polymerase subunit beta (1072 aa).

It belongs to the RNA polymerase beta chain family. In terms of assembly, in plastids the minimal PEP RNA polymerase catalytic core is composed of four subunits: alpha, beta, beta', and beta''. When a (nuclear-encoded) sigma factor is associated with the core the holoenzyme is formed, which can initiate transcription.

It localises to the plastid. It is found in the chloroplast. The enzyme catalyses RNA(n) + a ribonucleoside 5'-triphosphate = RNA(n+1) + diphosphate. Functionally, DNA-dependent RNA polymerase catalyzes the transcription of DNA into RNA using the four ribonucleoside triphosphates as substrates. This Lobularia maritima (Sweet alyssum) protein is DNA-directed RNA polymerase subunit beta.